The primary structure comprises 145 residues: Superoxide dismutase [Mn/Fe] (145 aa).

Residues histidine 10 and histidine 64 each contribute to the Fe(3+) site. The Mn(2+) site is built by histidine 10 and histidine 64.

It belongs to the iron/manganese superoxide dismutase family. Mn(2+) is required as a cofactor. It depends on Fe(3+) as a cofactor.

The enzyme catalyses 2 superoxide + 2 H(+) = H2O2 + O2. Destroys superoxide anion radicals which are normally produced within the cells and which are toxic to biological systems. Catalyzes the dismutation of superoxide anion radicals into O2 and H2O2 by successive reduction and oxidation of the transition metal ion at the active site. This is Superoxide dismutase [Mn/Fe] (sodA) from Streptococcus porcinus.